The chain runs to 218 residues: Large ribosomal subunit protein uL4 (218 aa).

Positions 46 to 100 are disordered; it reads ARQGTHSTKTRAEVRGGGRKPFRQKGTGRARQGSIRAPHFTGGGISHGPKPRDYA. Residues 62–73 are compositionally biased toward basic residues; the sequence is GGRKPFRQKGTG.

The protein belongs to the universal ribosomal protein uL4 family. Part of the 50S ribosomal subunit.

Its function is as follows. One of the primary rRNA binding proteins, this protein initially binds near the 5'-end of the 23S rRNA. It is important during the early stages of 50S assembly. It makes multiple contacts with different domains of the 23S rRNA in the assembled 50S subunit and ribosome. Functionally, forms part of the polypeptide exit tunnel. The polypeptide is Large ribosomal subunit protein uL4 (Corynebacterium efficiens (strain DSM 44549 / YS-314 / AJ 12310 / JCM 11189 / NBRC 100395)).